A 273-amino-acid polypeptide reads, in one-letter code: Ribosomal RNA small subunit methyltransferase A (273 aa).

Residues Asn18, Leu20, Gly45, Glu66, Asp91, and Asn113 each coordinate S-adenosyl-L-methionine.

It belongs to the class I-like SAM-binding methyltransferase superfamily. rRNA adenine N(6)-methyltransferase family. RsmA subfamily.

The protein localises to the cytoplasm. It carries out the reaction adenosine(1518)/adenosine(1519) in 16S rRNA + 4 S-adenosyl-L-methionine = N(6)-dimethyladenosine(1518)/N(6)-dimethyladenosine(1519) in 16S rRNA + 4 S-adenosyl-L-homocysteine + 4 H(+). Specifically dimethylates two adjacent adenosines (A1518 and A1519) in the loop of a conserved hairpin near the 3'-end of 16S rRNA in the 30S particle. May play a critical role in biogenesis of 30S subunits. The chain is Ribosomal RNA small subunit methyltransferase A from Klebsiella pneumoniae (strain 342).